The following is an 805-amino-acid chain: G-type lectin S-receptor-like serine/threonine-protein kinase SD1-29 (805 aa).

The N-terminal stretch at Met1–Ala21 is a signal peptide. Positions Ala22–Phe141 constitute a Bulb-type lectin domain. Over Ala22 to Lys428 the chain is Extracellular. Asn24, Asn50, Asn85, Asn91, and Asn248 each carry an N-linked (GlcNAc...) asparagine glycan. The EGF-like domain occupies Pro277–Glu313. 2 cysteine pairs are disulfide-bonded: Cys281–Cys293 and Cys287–Cys301. Asn319 and Asn378 each carry an N-linked (GlcNAc...) asparagine glycan. The PAN domain occupies Cys332–Ser418. 2 cysteine pairs are disulfide-bonded: Cys371–Cys392 and Cys375–Cys381. The chain crosses the membrane as a helical span at residues Ile429 to Met449. Residues Leu450–Arg805 are Cytoplasmic-facing. Residues Phe488–Phe773 form the Protein kinase domain. ATP is bound by residues Leu494–Val502 and Lys516. Phosphoserine occurs at positions 522 and 537. The segment at Cys577–Ile594 is caM-binding. At Tyr600 the chain carries Phosphotyrosine. Asp613 serves as the catalytic Proton acceptor. A phosphoserine mark is found at Ser617 and Ser630. A Phosphothreonine modification is found at Thr647. Phosphoserine is present on residues Ser690 and Ser793.

It belongs to the protein kinase superfamily. Ser/Thr protein kinase family. As to quaternary structure, interacts with PUB9, PUB13, PUB14, PUB29, PUB38, PUB44 and PUB45. Interacts with PBL34, PBL35 and PBL36. In terms of processing, autophosphorylated at Tyr-600. Autophosphorylation at Tyr-600 is required for downstream phosphorylation of the receptor-like cytoplasmic kinase PBL34, PBL35 and PBL36, and activation of plant immunity.

The protein localises to the cell membrane. The catalysed reaction is L-seryl-[protein] + ATP = O-phospho-L-seryl-[protein] + ADP + H(+). The enzyme catalyses L-threonyl-[protein] + ATP = O-phospho-L-threonyl-[protein] + ADP + H(+). It catalyses the reaction L-tyrosyl-[protein] + ATP = O-phospho-L-tyrosyl-[protein] + ADP + H(+). Its function is as follows. S-domain receptor protein kinase involved in lipopolysaccharide (LPS) sensing. Specifically detects LPS of Pseudomonas and Xanthomonas species. LPS are major components of the outer membrane of Gram-negative bacteria and are important microbe-associated molecular patterns (MAMPs) that trigger biphasic production of reactive oxygen species (ROS) and immune responses in plants. Seems to be only partially associated with the second LPS-triggered ROS burst. Mediates defense signaling in response to the medium-chain 3-hydroxy fatty acid 3-OH-C10:0, a pathogen-associated molecular pattern (PAMP) which induces autophosphorylation at Tyr-600. Autophosphorylation at Tyr-600 is required for downstream phosphorylation of the receptor-like cytoplasmic kinase PBL34, PBL35 and PBL36, and activation of plant immunity. Functionally, (Microbial infection) Targeted by the bacterial type III effector protein tyrosine phosphatase HopAO1 from Pseudomonas syringae. HopAO1 dephosphorylates Tyr-600, which suppresses the immune response. The chain is G-type lectin S-receptor-like serine/threonine-protein kinase SD1-29 from Arabidopsis thaliana (Mouse-ear cress).